Reading from the N-terminus, the 145-residue chain is Protein SprT-like (145 aa).

A SprT-like domain is found at 5-140 (DYVREVSLAD…ACGRCHGRLI (136 aa)). H64 is a binding site for Zn(2+). E65 is a catalytic residue. H68 is a binding site for Zn(2+).

Belongs to the SprT family. Requires Zn(2+) as cofactor.

The protein resides in the cytoplasm. This chain is Protein SprT-like, found in Streptococcus equi subsp. equi (strain 4047).